The chain runs to 160 residues: Small ribosomal subunit protein uS7 (160 aa).

It belongs to the universal ribosomal protein uS7 family. Part of the 30S ribosomal subunit. Contacts proteins S9 and S11.

Its function is as follows. One of the primary rRNA binding proteins, it binds directly to 16S rRNA where it nucleates assembly of the head domain of the 30S subunit. Is located at the subunit interface close to the decoding center, probably blocks exit of the E-site tRNA. This is Small ribosomal subunit protein uS7 from Rickettsia conorii (strain ATCC VR-613 / Malish 7).